Reading from the N-terminus, the 386-residue chain is uncharacterized protein (386 aa).

2 helical membrane-spanning segments follow: residues 54-74 (AVLQ…AIVA) and 347-367 (LLGG…PIAG).

It to M.tuberculosis Rv0628c.

The protein resides in the cell membrane. This is an uncharacterized protein from Mycobacterium tuberculosis (strain CDC 1551 / Oshkosh).